We begin with the raw amino-acid sequence, 42 residues long: Large ribosomal subunit protein bL34c (42 aa).

Belongs to the bacterial ribosomal protein bL34 family.

The protein localises to the plastid. It is found in the chloroplast. The chain is Large ribosomal subunit protein bL34c (rpl34) from Olisthodiscus luteus (Marine phytoflagellate).